Consider the following 622-residue polypeptide: UvrABC system protein C (622 aa).

One can recognise a GIY-YIG domain in the interval 12 to 91; it reads SSPGVYIMKD…IKKYRPKYNF (80 aa). A UVR domain is found at 201-236; sequence REILKIFRERMSAAAAAEKYEKAARFRDLIRSIEVT.

Belongs to the UvrC family. As to quaternary structure, interacts with UvrB in an incision complex.

The protein resides in the cytoplasm. Functionally, the UvrABC repair system catalyzes the recognition and processing of DNA lesions. UvrC both incises the 5' and 3' sides of the lesion. The N-terminal half is responsible for the 3' incision and the C-terminal half is responsible for the 5' incision. In Geotalea daltonii (strain DSM 22248 / JCM 15807 / FRC-32) (Geobacter daltonii), this protein is UvrABC system protein C.